Here is a 581-residue protein sequence, read N- to C-terminus: Ezrin (581 aa).

An FERM domain is found at Pro-2 to Arg-295. An N6-acetyllysine modification is found at Lys-60. Positions Ile-115–Glu-120 match the [IL]-x-C-x-x-[DE] motif motif. Position 146 is a phosphotyrosine; by PDGFR (Tyr-146). The interaction with SCYL3 stretch occupies residues Glu-244–Met-581. Residues Val-302–Glu-462 adopt a coiled-coil conformation. The tract at residues Lys-306–Met-341 is disordered. Over residues Gln-308–Met-341 the composition is skewed to basic and acidic residues. Position 354 is a phosphotyrosine; by PDGFR (Tyr-354). Phosphoserine is present on Ser-366. Position 476 is a phosphotyrosine (Tyr-476). Positions Ser-534–Tyr-560 are disordered. Residues Gln-535–Tyr-560 are compositionally biased toward basic and acidic residues. Phosphothreonine; by ROCK2 and PKC/PRKCI is present on Thr-562.

Interacts with PALS1 and NHERF2. Found in a complex with EZR, PODXL and NHERF2. Interacts with MCC, PLEKHG6, PODXL, SCYL3/PACE1, NHERF1 and TMEM8B. Interacts (when phosphorylated) with FES/FPS. Interacts with dimeric S100P, the interaction may be activating through unmasking of F-actin binding sites. Identified in complexes that contain VIM, EZR, AHNAK, BFSP1, BFSP2, ANK2, PLEC, PRX and spectrin. Detected in a complex composed of at least EZR, AHNAK, PPL and PRX. Interacts with PDPN (via cytoplasmic domain); activates RHOA and promotes epithelial-mesenchymal transition. Interacts with SPN/CD43 cytoplasmic tail, CD44 and ICAM2. Interacts with SLC9A3; interaction targets SLC9A3 to the apical membrane. Interacts with SLC9A1; regulates interactions of SLC9A1 with cytoskeletal and promotes stress fiber formation. Interacts with CLIC5; may work together in a complex which also includes RDX and MYO6 to stabilize linkages between the plasma membrane and subjacent actin cytoskeleton at the base of stereocilia. In terms of processing, phosphorylated by tyrosine-protein kinases. Phosphorylation by ROCK2 suppresses the head-to-tail association of the N-terminal and C-terminal halves resulting in an opened conformation which is capable of actin and membrane-binding. Post-translationally, S-nitrosylation is induced by interferon-gamma and oxidatively-modified low-densitity lipoprotein (LDL(ox)) possibly implicating the iNOS-S100A8/9 transnitrosylase complex. Detected in eye lens fiber cells (at protein level).

Its subcellular location is the apical cell membrane. The protein localises to the cell projection. The protein resides in the microvillus membrane. It localises to the ruffle membrane. It is found in the cytoplasm. Its subcellular location is the cell cortex. The protein localises to the cytoskeleton. The protein resides in the microvillus. Its activity is regulated as follows. A head-to-tail association, of the N-terminal and C-terminal halves results in a closed conformation (inactive form) which is incapable of actin or membrane-binding. Functionally, probably involved in connections of major cytoskeletal structures to the plasma membrane. In epithelial cells, required for the formation of microvilli and membrane ruffles on the apical pole. Along with PLEKHG6, required for normal macropinocytosis. In Bos taurus (Bovine), this protein is Ezrin (EZR).